Here is a 270-residue protein sequence, read N- to C-terminus: 4-hydroxy-tetrahydrodipicolinate reductase (270 aa).

Residues 9-14 (GAGGRM) and Glu-35 contribute to the NAD(+) site. Arg-36 contacts NADP(+). Residues 99 to 101 (GTT) and 123 to 126 (ASNF) contribute to the NAD(+) site. His-156 acts as the Proton donor/acceptor in catalysis. His-157 is a binding site for (S)-2,3,4,5-tetrahydrodipicolinate. Catalysis depends on Lys-160, which acts as the Proton donor. 166–167 (GT) contributes to the (S)-2,3,4,5-tetrahydrodipicolinate binding site.

The protein belongs to the DapB family.

It localises to the cytoplasm. The enzyme catalyses (S)-2,3,4,5-tetrahydrodipicolinate + NAD(+) + H2O = (2S,4S)-4-hydroxy-2,3,4,5-tetrahydrodipicolinate + NADH + H(+). It catalyses the reaction (S)-2,3,4,5-tetrahydrodipicolinate + NADP(+) + H2O = (2S,4S)-4-hydroxy-2,3,4,5-tetrahydrodipicolinate + NADPH + H(+). It functions in the pathway amino-acid biosynthesis; L-lysine biosynthesis via DAP pathway; (S)-tetrahydrodipicolinate from L-aspartate: step 4/4. Functionally, catalyzes the conversion of 4-hydroxy-tetrahydrodipicolinate (HTPA) to tetrahydrodipicolinate. This Haemophilus influenzae (strain PittEE) protein is 4-hydroxy-tetrahydrodipicolinate reductase.